The primary structure comprises 388 residues: Succinate--CoA ligase [ADP-forming] subunit beta (388 aa).

ATP is bound by residues K46, 53–55 (GRG), E99, C102, and E107. Positions 199 and 213 each coordinate Mg(2+). Substrate contacts are provided by residues N264 and 321 to 323 (GIV).

It belongs to the succinate/malate CoA ligase beta subunit family. Heterotetramer of two alpha and two beta subunits. The cofactor is Mg(2+).

It catalyses the reaction succinate + ATP + CoA = succinyl-CoA + ADP + phosphate. The enzyme catalyses GTP + succinate + CoA = succinyl-CoA + GDP + phosphate. It functions in the pathway carbohydrate metabolism; tricarboxylic acid cycle; succinate from succinyl-CoA (ligase route): step 1/1. Its function is as follows. Succinyl-CoA synthetase functions in the citric acid cycle (TCA), coupling the hydrolysis of succinyl-CoA to the synthesis of either ATP or GTP and thus represents the only step of substrate-level phosphorylation in the TCA. The beta subunit provides nucleotide specificity of the enzyme and binds the substrate succinate, while the binding sites for coenzyme A and phosphate are found in the alpha subunit. This chain is Succinate--CoA ligase [ADP-forming] subunit beta, found in Actinobacillus pleuropneumoniae serotype 5b (strain L20).